The sequence spans 275 residues: Undecaprenyl-diphosphatase (275 aa).

The next 7 helical transmembrane spans lie at 1 to 21, 41 to 61, 95 to 115, 118 to 138, 192 to 212, 223 to 243, and 255 to 275; these read MTTF…FLPV, ILFL…FVYA, LLII…KDLF, FYNS…LLWT, ATKF…VFEV, FTLT…VFAI, and LYYF…FSLL.

This sequence belongs to the UppP family.

It is found in the cell membrane. The catalysed reaction is di-trans,octa-cis-undecaprenyl diphosphate + H2O = di-trans,octa-cis-undecaprenyl phosphate + phosphate + H(+). Catalyzes the dephosphorylation of undecaprenyl diphosphate (UPP). Confers resistance to bacitracin. The chain is Undecaprenyl-diphosphatase from Alkaliphilus metalliredigens (strain QYMF).